A 565-amino-acid chain; its full sequence is DNA-binding protein scr1 (565 aa).

Positions 1–19 are enriched in polar residues; the sequence is MSEATTATTTGKPSRSTKN. A disordered region spans residues 1–25; that stretch reads MSEATTATTTGKPSRSTKNPDAPRP. 2 C2H2-type zinc fingers span residues 26-48 and 54-78; these read YKCPLCTKAFYRLEHQTRHIRTH and HVCTFPGCAKRFSRSDELTRHARIH. 4 disordered regions span residues 79–119, 261–303, 390–434, and 466–565; these read TNAN…VHMT, SNAP…STGS, RPVS…DDPS, and ASTP…MTKP. Residues 80–102 are compositionally biased toward low complexity; sequence NANSRRNAAAAAAANNSARSSNS. Composition is skewed to polar residues over residues 108 to 119, 276 to 286, and 294 to 303; these read EPSTNNAGVHMT, LPSSSNTSPNH, and GLTSNSSTGS. The segment covering 391 to 413 has biased composition (low complexity); it reads PVSPCSTAPSSPTFSTRSFSPTP. A compositionally biased stretch (polar residues) spans 466–478; that stretch reads ASTPASGAVSRTP. Composition is skewed to low complexity over residues 479-492, 517-526, and 537-555; these read SSVSLSSLSNVNSS, FSSSSRVSVS, and SSSTKSASSSYSTTTPAFS.

It belongs to the creA/MIG C2H2-type zinc-finger protein family.

The protein localises to the nucleus. Its function is as follows. Involved in carbon catabolite repression. Represses the transcription of various genes including the inv1 gene. This chain is DNA-binding protein scr1 (scr1), found in Schizosaccharomyces pombe (strain 972 / ATCC 24843) (Fission yeast).